Reading from the N-terminus, the 1203-residue chain is Regulator of telomere elongation helicase 1 (1203 aa).

One can recognise a Helicase ATP-binding domain in the interval 7–296 (NGVTVDFPFQ…ARVTQQGELQ (290 aa)). 42-49 (SPTGTGKT) provides a ligand contact to ATP. The [4Fe-4S] cluster site is built by cysteine 145, cysteine 163, cysteine 172, and cysteine 207. Positions 151-167 (KKQESNHMQISLCRKKV) match the Nuclear localization signal motif. A DEAH box motif is present at residues 250 to 253 (DEAH). The Nuclear localization signal signature appears at 871–877 (QKGGRKK). Disordered stretches follow at residues 998–1020 (QLDPGQHLNQGQPHLSAHPTSKG) and 1120–1203 (TTGK…RSKQ). A compositionally biased stretch (polar residues) spans 1004-1020 (HLNQGQPHLSAHPTSKG). The segment covering 1123–1134 (KDLELEGPRDES) has biased composition (basic and acidic residues). The PIP-box signature appears at 1160–1167 (QSKISSFF). Basic and acidic residues predominate over residues 1169 to 1181 (QRPDESVRSDDTT).

The protein belongs to the helicase family. RAD3/XPD subfamily. As to quaternary structure, interacts with TERF1. Interacts (via PIP-box) with PCNA; the interaction is direct and essential for suppressing telomere fragility. Interacts with MMS19; the interaction mediates the association of RTEL1 with the cytosolic iron-sulfur protein assembly (CIA) complex. As to expression, widely expressed. Expressed in spleen, thymus, Peyer patches, kidney, and intestine. Not expressed in brain, heart, lung, skeletal muscles, skin and white fat. In the adult gonad, it is highly expressed in the testis, mainly in the spermatogonia and meiotic spermatocytes.

Its subcellular location is the nucleus. The enzyme catalyses ATP + H2O = ADP + phosphate + H(+). Its function is as follows. A probable ATP-dependent DNA helicase implicated in telomere-length regulation, DNA repair and the maintenance of genomic stability. Acts as an anti-recombinase to counteract toxic recombination and limit crossover during meiosis. Regulates meiotic recombination and crossover homeostasis by physically dissociating strand invasion events and thereby promotes noncrossover repair by meiotic synthesis dependent strand annealing (SDSA) as well as disassembly of D loop recombination intermediates. Also disassembles T loops and prevents telomere fragility by counteracting telomeric G4-DNA structures, which together ensure the dynamics and stability of the telomere. The chain is Regulator of telomere elongation helicase 1 from Mus musculus (Mouse).